The sequence spans 1481 residues: Cystic fibrosis transmembrane conductance regulator (1481 aa).

Residues 1–77 lie on the Cytoplasmic side of the membrane; the sequence is MQKSPLEKAG…KLINALRRCF (77 aa). A helical membrane pass occupies residues 78 to 98; that stretch reads FWRFMFYGILLYLGEVTKAVQ. Positions 81-365 constitute an ABC transmembrane type-1 1 domain; the sequence is FMFYGILLYL…WAVQTWYDSL (285 aa). Residues 99-122 lie on the Extracellular side of the membrane; sequence PLLLGRIIASYDPDNKVERSIAIY. A helical membrane pass occupies residues 123–146; it reads LGIGLCLLFVVRTLLLHPAIFGLH. Residues 147–195 lie on the Cytoplasmic side of the membrane; it reads HIGMQMRIAMFSLIYKKTLKLSSRVLDKISIGQLISLLSNNLNKFDEGL. A helical membrane pass occupies residues 196 to 216; that stretch reads ALAHFVWISPLQVTLLMGLLW. The Extracellular segment spans residues 217-222; it reads ELLQAS. Residues 223-243 traverse the membrane as a helical segment; that stretch reads AFCGLAFLIVLALVQAGLGRM. The Cytoplasmic segment spans residues 244-298; sequence MMKYRDQRAGKINERLVITSEMIENIQSVKAYCWEEAMEKMIENLRQTELKLTRK. The helical transmembrane segment at 299 to 319 threads the bilayer; that stretch reads AAYVRYFNSSAFFFSGFFVVF. The Extracellular segment spans residues 320-339; that stretch reads LSVLPYALTKGIILRKIFTT. Residues 340–358 form a helical membrane-spanning segment; sequence ISFCIVLRMAVTRQFPWAV. Over 359–858 the chain is Cytoplasmic; the sequence is QTWYDSLGAI…YLRYITVHRS (500 aa). ATP contacts are provided by residues Trp-401, Ser-434, 458–465, and Gln-493; that span reads GSTGAGKT. Residues 423 to 646 enclose the ABC transporter 1 domain; the sequence is NGDNNLFFSN…RPDFSSKLMG (224 aa). Residue Cys-524 is the site of S-palmitoyl cysteine attachment. Residues Ser-549 and Ser-660 each carry the phosphoserine modification. The interval 654-831 is disordered R region; the sequence is SAERRNSILT…EEINEEDLKE (178 aa). Phosphoserine; by PKA is present on Ser-670. At Ser-686 the chain carries Phosphoserine. Lys-688 participates in a covalent cross-link: Glycyl lysine isopeptide (Lys-Gly) (interchain with G-Cter in ubiquitin). Ser-700 and Ser-712 each carry phosphoserine. Position 717 is a phosphothreonine (Thr-717). Residues Ser-737, Ser-768, Ser-790, Ser-795, and Ser-813 each carry the phosphoserine modification. Residues 859–879 form a helical membrane-spanning segment; the sequence is LIFVLIWCIVIFLAEVAASLV. The ABC transmembrane type-1 2 domain maps to 859-1155; the sequence is LIFVLIWCIV…AVNSSIDVDS (297 aa). Topologically, residues 880 to 918 are extracellular; that stretch reads VLWLFGNTAPQDKENSTKSGNSSYAVIITNTSSYYFFYI. 3 N-linked (GlcNAc...) asparagine glycosylation sites follow: Asn-894, Asn-900, and Asn-909. Residues 919-939 traverse the membrane as a discontinuously helical segment; that stretch reads YVGVADTLLALGLFRGLPLVH. The Cytoplasmic segment spans residues 940-990; sequence TLITVSKILHHKMLHSVLQAPMSTLNTLKAGGILNRFSKDIAILDDLLPLT. A helical transmembrane segment spans residues 991–1011; that stretch reads IFDFIQLLLIVVGAIAVVSVL. Over 1012–1013 the chain is Extracellular; sequence QP. A helical transmembrane segment spans residues 1014–1034; that stretch reads YIFLATVPVIAAFILLRAYFL. The Cytoplasmic portion of the chain corresponds to 1035-1095; the sequence is HTSQQLKQLE…TANWFLYLST (61 aa). The chain crosses the membrane as a helical span at residues 1096–1116; that stretch reads LRWFQMRIEMIFVLFFIAVAF. At 1117–1130 the chain is on the extracellular side; sequence ISILTTGEGEGRVG. A helical membrane pass occupies residues 1131 to 1151; sequence IILTLAMNIMSTLQWAVNSSI. Residues 1152–1481 are Cytoplasmic-facing; it reads DVDSLMRSVS…AEEEVQGTRL (330 aa). Residues 1199-1444 enclose the ABC transporter 2 domain; sequence VKKDDVWPSG…KSLFRQAISS (246 aa). ATP contacts are provided by residues Tyr-1220 and 1245–1252; that span reads GRTGSGKS. An interaction with GORASP2 region spans residues 1387-1481; that stretch reads RTLKQAFADC…AEEEVQGTRL (95 aa). Cys-1396 carries the S-palmitoyl cysteine lipid modification. A phosphoserine mark is found at Ser-1445 and Ser-1457. Residues 1449–1481 form a disordered region; that stretch reads KLFPHRNSSKHKSRPQITALKEEAEEEVQGTRL. Residues 1450 to 1462 are compositionally biased toward basic residues; sequence LFPHRNSSKHKSR. Positions 1471–1481 are enriched in acidic residues; that stretch reads EAEEEVQGTRL. A PDZ-binding motif is present at residues 1479 to 1481; that stretch reads TRL.

It belongs to the ABC transporter superfamily. ABCC family. CFTR transporter (TC 3.A.1.202) subfamily. As to quaternary structure, monomer; does not require oligomerization for channel activity. May form oligomers in the membrane. Interacts with SLC26A3, SLC26A6 and NHERF1. Interacts with SHANK2. Interacts with MYO6. Interacts (via C-terminus) with GOPC (via PDZ domain); this promotes CFTR internalization and thereby decreases channel activity. Interacts with SLC4A7 through NHERF1. Found in a complex with MYO5B and RAB11A. Interacts with ANO1. Interacts with SLC26A8. Interacts with AHCYL1; the interaction increases CFTR activity. Interacts with CSE1L. The core-glycosylated form interacts with GORASP2 (via PDZ GRASP-type 1 domain) in respone to ER stress. Interacts with MARCHF2; the interaction leads to CFTR ubiqtuitination and degradation. Interacts with ADGRG2. In terms of processing, N-glycosylated. Phosphorylated; cAMP treatment promotes phosphorylation and activates the channel. Dephosphorylation decreases the ATPase activity (in vitro). Phosphorylation at PKA sites activates the channel. Phosphorylation at PKC sites enhances the response to phosphorylation by PKA. Phosphorylated by AMPK; this inhibits channel activity. Post-translationally, ubiquitinated, leading to its degradation in the lysosome. Deubiquitination by USP10 in early endosomes enhances its endocytic recycling to the cell membrane. Ubiquitinated by RNF185 during ER stress. Ubiquitinated by MARCHF2. As to expression, isoform 1 is expressed in the pancreas. Isoform 2 is specifically expressed in the ventricle.

It is found in the apical cell membrane. The protein resides in the early endosome membrane. Its subcellular location is the cell membrane. It localises to the recycling endosome membrane. The protein localises to the endoplasmic reticulum membrane. It is found in the nucleus. The catalysed reaction is ATP + H2O + closed Cl(-) channel = ADP + phosphate + open Cl(-) channel.. It catalyses the reaction chloride(in) = chloride(out). The enzyme catalyses hydrogencarbonate(in) = hydrogencarbonate(out). It carries out the reaction ATP + H2O = ADP + phosphate + H(+). Its function is as follows. Epithelial ion channel that plays an important role in the regulation of epithelial ion and water transport and fluid homeostasis. Mediates the transport of chloride ions across the cell membrane. Possesses an intrinsic ATPase activity and utilizes ATP to gate its channel; the passive flow of anions through the channel is gated by cycles of ATP binding and hydrolysis by the ATP-binding domains. The ion channel is also permeable to HCO(3)(-); selectivity depends on the extracellular chloride concentration. Exerts its function also by modulating the activity of other ion channels and transporters. Contributes to the regulation of the pH and the ion content of the epithelial fluid layer. Modulates the activity of the epithelial sodium channel (ENaC) complex, in part by regulating the cell surface expression of the ENaC complex. May regulate bicarbonate secretion and salvage in epithelial cells by regulating the transporter SLC4A7. Can inhibit the chloride channel activity of ANO1. Plays a role in the chloride and bicarbonate homeostasis during sperm epididymal maturation and capacitation. This is Cystic fibrosis transmembrane conductance regulator from Oryctolagus cuniculus (Rabbit).